The primary structure comprises 300 residues: ETS homologous factor (300 aa).

The PNT domain maps to 29-115 (STCNVSSGFF…SNLQHLKWNG (87 aa)). The disordered stretch occupies residues 183-202 (ESPDMKKEQDPPAKCHTKKH). The segment covering 185–195 (PDMKKEQDPPA) has biased composition (basic and acidic residues). Residues 207-289 (THLWEFIRDI…DGRRLVYKFG (83 aa)) constitute a DNA-binding region (ETS).

The protein belongs to the ETS family.

The protein localises to the nucleus. Its function is as follows. Transcriptional activator that may play a role in regulating epithelial cell differentiation and proliferation. May act as a repressor for a specific subset of ETS/AP-1-responsive genes, and as a modulator of the nuclear response to mitogen-activated protein kinase signaling cascades. Binds to DNA sequences containing the consensus nucleotide core sequence GGAA. Involved in regulation of TNFRSF10B/DR5 expression through Ets-binding sequences on the TNFRSF10B/DR5 promoter. The polypeptide is ETS homologous factor (EHF) (Pan troglodytes (Chimpanzee)).